Reading from the N-terminus, the 250-residue chain is Pre-protein VI (250 aa).

A propeptide spanning residues 1–33 is cleaved from the precursor; the sequence is MEDINFASLAPRHGSRPFMGNWQDIGTSNMSGG. Residues 34–54 form an amphipathic alpha-helix essential for membrane lytic activity region; it reads AFSWGSLWSGIKNFGSTIKNY. The interval 36–53 is involved in endosomal membrane lysis; that stretch reads SWGSLWSGIKNFGSTIKN. An interaction with hexon protein region spans residues 48–74; sequence GSTIKNYGSKAWNSSTGQMLRDKLKEQ. A Nuclear export signal motif is present at residues 67 to 76; it reads LRDKLKEQNF. The disordered stretch occupies residues 103 to 147; the sequence is INSKLDPRPPVEEPPPAVETVSPEGRGEKRPRPDREETLVTQIDE. Residue serine 124 is modified to Phosphoserine; by host. A compositionally biased stretch (basic and acidic residues) spans 127 to 140; the sequence is GRGEKRPRPDREET. The short motif at 131 to 135 is the Nuclear localization signal element; the sequence is KRPRP. Phosphothreonine; by host is present on threonine 143. Positions 148–151 match the PPXY motif motif; the sequence is PPSY. Positions 206–220 are enriched in low complexity; it reads PSRASLRRAASGPRS. Residues 206–226 are disordered; it reads PSRASLRRAASGPRSMRPVAS. Positions 231 to 242 match the Nuclear export signal motif; sequence STLNSIVGLGVQ. The interval 233 to 239 is interaction with hexon protein; the sequence is LNSIVGL. A binds to importin alpha/beta, involved in hexon nuclear import region spans residues 240 to 250; that stretch reads GVQSLKRRRCF. Positions 245–248 match the Nuclear localization signal motif; it reads KRRR.

The protein belongs to the adenoviridae protein VI family. As to quaternary structure, interacts with hexon protein; this interaction allows nuclear import of hexon trimers and possibly pre-capsid assembly. Interacts (via C-terminal NLS) with importin alpha/beta. In terms of assembly, interacts (via PPxY motif) with host NEDD4 ubiquitine ligase; this interaction might play a role in virus intracellular transport during entry. Part of a complex composed of the core-capsid bridging protein, the endosome lysis protein VI and the hexon-linking protein VIII; these interactions bridge the virus core to the capsid. Interacts with peripentonal hexons; this interaction stabilizes the capsid by gluing two peripentonal hexons together and joining them with an adjacent group-of-nine hexon. Heterodimer with the viral protease; disulfide-linked. Interacts with the viral protease. In terms of processing, ubiquitinated by Nedd4 following partial capsid disassembly; which might play a role in intracellular virus movement during entry. Post-translationally, contains the major nuclear import and export signals. Proteolytically removed during virion maturation. The processing of the C-terminus turns the precursor into a mature viral structural protein and abrogates its ability to promote hexon import and act as a potential chaperone protein.

The protein resides in the host nucleus. It localises to the host cytoplasm. The protein localises to the virion. Its function is as follows. During virus assembly, promotes hexon trimers nuclear import through nuclear pore complexes via an importin alpha/beta-dependent mechanism. By analogy to herpesviruses capsid assembly, might act as a chaperone to promote the formation of the icosahedral capsid. In terms of biological role, structural component of the virion that provides increased stability to the particle shell through its interaction with the core-capsid bridging protein and the hexon-linking protein VIII. Fibers shedding during virus entry into host cell allows the endosome lysis protein to be exposed as a membrane-lytic peptide. Exhibits pH-independent membrane fragmentation activity and probably mediates viral rapid escape from host endosome via organellar membrane lysis. It is not clear if it then remains partially associated with the capsid and involved in the intracellular microtubule-dependent transport of capsid to the nucleus, or if it is lost during endosomal penetration. Cofactor that activates the viral protease. Binds to viral protease in a 1:1 ratio. The chain is Pre-protein VI from Human adenovirus C serotype 2 (HAdV-2).